The primary structure comprises 221 residues: uncharacterized protein (221 aa).

Over residues 1 to 16 (MESSRWDKDPPGERRP) the composition is skewed to basic and acidic residues. Residues 1-64 (MESSRWDKDP…SHTPQTNTRR (64 aa)) form a disordered region.

This is an uncharacterized protein from Homo sapiens (Human).